Consider the following 333-residue polypeptide: Phosphate acyltransferase (333 aa).

It belongs to the PlsX family. Homodimer. Probably interacts with PlsY.

It localises to the cytoplasm. The enzyme catalyses a fatty acyl-[ACP] + phosphate = an acyl phosphate + holo-[ACP]. It participates in lipid metabolism; phospholipid metabolism. Its function is as follows. Catalyzes the reversible formation of acyl-phosphate (acyl-PO(4)) from acyl-[acyl-carrier-protein] (acyl-ACP). This enzyme utilizes acyl-ACP as fatty acyl donor, but not acyl-CoA. The polypeptide is Phosphate acyltransferase (Thermoanaerobacterium thermosaccharolyticum (strain ATCC 7956 / DSM 571 / NCIMB 9385 / NCA 3814 / NCTC 13789 / WDCM 00135 / 2032) (Clostridium thermosaccharolyticum)).